The chain runs to 322 residues: Atrochrysone carboxyl ACP thioesterase nsrC (322 aa).

4 residues coordinate Zn(2+): His105, His107, Asp109, and His110. The Proton donor/acceptor role is filled by Asp109.

It belongs to the metallo-beta-lactamase superfamily. Zn(2+) serves as cofactor.

It catalyses the reaction atrochrysone carboxyl-[ACP] + H2O = atrochrysone carboxylate + holo-[ACP] + H(+). The protein operates within secondary metabolite biosynthesis. In terms of biological role, atrochrysone carboxyl ACP thioesterase; part of the gene cluster that mediates the biosynthesis of the tetrahydroxanthone dimer neosartorin, which exhibits antibacterial activity. The two different monomeric units appear to be synthesized by the same set of enzymes, among which the Baeyer-Villiger monooxygenase nsrF is the key enzyme for the divergence of the biosynthetic routes. The pathway begins with the synthesis of atrochrysone thioester by the polyketide synthase nsrB. The atrochrysone carboxyl ACP thioesterase nsrC then breaks the thioester bond and releases the atrochrysone carboxylic acid from AacuL. Atrochrysone carboxylic acid is decarboxylated by the decarboxylase nsrE, and oxidized by the anthrone oxygenase nsrD to yield emodin. Emodin is then reduced to emodin hydroquinone by the oxidoreductase nsrR. A-ring reduction by the short chain dehydrogenase nsrJ, dehydration by the scytalone dehydratase-like protein nsrI and probable spontaneous re-oxidation, results in overall deoxygenation to chrysophanol. The Baeyer-Villiger monooxygenase nsrF accepts chrysophanol as a substrate to insert one oxygen atom at two different positions to yield the precursors of both monomric units. NsrF is promiscuous/flexible in interacting with the 2 (non methylated and methylated) aromatic rings of chrysophanol, thus diverging the biosynthetic pathway at this point. After the hydrolysis of the lactones, methylesterification by the methyltransferase nsrG yields respectively moniliphenone and 2,2',6'-trihydroxy-4-methyl-6-methoxya-cyldiphenylmethanone. The next steps are the hydroxylation by the FAD-dependent monooxygenase nsrK, followed by isomerization by the monooxygenase nsrQ. The short chain dehydrogenase/reductase nsrO then catalyzes the C-5 ketoreduction to give the xanthone skeleton of blennolide C and 5-acetylblennolide A. The acetyltransferase nsrL has a strict substrate specificity and uses only blennolide A but not blennolide C to yield 5-acetylblennolide A as the single-acetylated product. In the final step of the biosynthesis, the heterodimerization of the 2 xanthones, blennolide C and 5-acetylblennolide A, is catalyzed by the cytochrome P450 monooxygenase nsrP. NsrP can utilize at least three different xanthones as its substrates to perform the dimerization reaction. The polypeptide is Atrochrysone carboxyl ACP thioesterase nsrC (Aspergillus novofumigatus (strain IBT 16806)).